The sequence spans 60 residues: UPF0434 protein YE1549 (60 aa).

It belongs to the UPF0434 family.

This Yersinia enterocolitica serotype O:8 / biotype 1B (strain NCTC 13174 / 8081) protein is UPF0434 protein YE1549.